Reading from the N-terminus, the 235-residue chain is Derlin-3 (235 aa).

Topologically, residues 1-22 are cytoplasmic; the sequence is MAWQGLAAEFLQVPAVTRAYTA. The helical transmembrane segment at 23–43 threads the bilayer; that stretch reads ACVLTTAAVQLELLSPFQLYF. The Lumenal portion of the chain corresponds to 44–58; that stretch reads NPHLVFRKFQVWRLV. A helical transmembrane segment spans residues 59–79; it reads TNFLFFGPLGFSFFFNMLFVF. Residues 80 to 98 lie on the Cytoplasmic side of the membrane; it reads RYCRMLEEGSFRGRTADFV. Residues 99–119 traverse the membrane as a helical segment; it reads FMFLFGGVLMTLLGLLGSLFF. The Lumenal segment spans residues 120–157; it reads LGQALMAMLVYVWSRRSPRVRVNFFGLLTFQAPFLPWA. A helical membrane pass occupies residues 158 to 178; it reads LMGFSLLLGNSILVDLLGIAV. Topologically, residues 179-235 are cytoplasmic; it reads GHIYYFLEDVFPNQPGGKRLLQTPGFLKLLLDAPAEDPNYLPLPEEQPGPHLPPPQQ. Residues 216 to 235 form a disordered region; that stretch reads PNYLPLPEEQPGPHLPPPQQ. The span at 223–235 shows a compositional bias: pro residues; that stretch reads EEQPGPHLPPPQQ.

It belongs to the derlin family. As to quaternary structure, forms homo- and heterooligomers with DERL2 and, to a lesser extent, with DERL1. Interacts with VCP and EDEM1. Interacts with SELENOK and SELENOS. Interacts with the signal recognition particle/SRP and the SRP receptor; in the process of endoplasmic reticulum stress-induced pre-emptive quality control. As to expression, unlike DERL1 and DERL2, restricted to several tissues. Expressed at high levels in placenta, pancreas, spleen and small intestine.

It is found in the endoplasmic reticulum membrane. Functional component of endoplasmic reticulum-associated degradation (ERAD) for misfolded lumenal glycoproteins, but not that of misfolded nonglycoproteins. May act by forming a channel that allows the retrotranslocation of misfolded glycoproteins into the cytosol where they are ubiquitinated and degraded by the proteasome. May mediate the interaction between VCP and the misfolded glycoproteins. May be involved in endoplasmic reticulum stress-induced pre-emptive quality control, a mechanism that selectively attenuates the translocation of newly synthesized proteins into the endoplasmic reticulum and reroutes them to the cytosol for proteasomal degradation. The chain is Derlin-3 from Homo sapiens (Human).